A 342-amino-acid chain; its full sequence is Platelet-activating factor receptor (342 aa).

Topologically, residues 1 to 16 are extracellular; sequence MELNSSSRVDSEFRYT. An N-linked (GlcNAc...) asparagine glycan is attached at asparagine 4. The chain crosses the membrane as a helical span at residues 17 to 38; sequence LFPIVYSIIFVLGIIANGYVLW. Residues 39 to 54 lie on the Cytoplasmic side of the membrane; it reads VFARLYPSKKLNEIKI. A helical transmembrane segment spans residues 55–74; the sequence is FMVNLTVADLLFLITLPLWI. Residues 75-91 are Extracellular-facing; it reads VYYSNQGNWFLPKFLCN. Cysteine 90 and cysteine 173 are disulfide-bonded. Residues 92–113 form a helical membrane-spanning segment; the sequence is LAGCLFFINTYCSVAFLGVITY. Topologically, residues 114 to 133 are cytoplasmic; it reads NRFQAVKYPIKTAQATTRKR. A helical membrane pass occupies residues 134–155; it reads GIALSLVIWVAIVAAASYFLVM. Over 156 to 184 the chain is Extracellular; that stretch reads DSTNVVSNKAGSGNITRCFEHYEKGSKPV. An N-linked (GlcNAc...) asparagine glycan is attached at asparagine 169. The helical transmembrane segment at 185 to 205 threads the bilayer; it reads LIIHICIVLGFFIVFLLILFC. Topologically, residues 206–233 are cytoplasmic; sequence NLVIIHTLLRQPVKQQRNAEVRRRALWM. A helical membrane pass occupies residues 234–254; it reads VCTVLAVFVICFVPHHMVQLP. Residues 255 to 276 lie on the Extracellular side of the membrane; sequence WTLAELGMWPSSNHQAINDAHQ. The helical transmembrane segment at 277-296 threads the bilayer; the sequence is VTLCLLSTNCVLDPVIYCFL. Residues 297-342 are Cytoplasmic-facing; that stretch reads TKKFRKHLSEKLNIMRSSQKCSRVTTDTGTEMAIPINHTPVNPIKN.

It belongs to the G-protein coupled receptor 1 family. As to quaternary structure, interacts with ARRB1.

The protein localises to the cell membrane. In terms of biological role, receptor for platelet activating factor, a chemotactic phospholipid mediator that possesses potent inflammatory, smooth-muscle contractile and hypotensive activity. Seems to mediate its action via a G protein that activates a phosphatidylinositol-calcium second messenger system. This is Platelet-activating factor receptor (PTAFR) from Cavia porcellus (Guinea pig).